Here is a 533-residue protein sequence, read N- to C-terminus: Glucose-6-phosphate isomerase (533 aa).

Glu322 functions as the Proton donor in the catalytic mechanism. Active-site residues include His351 and Lys455.

This sequence belongs to the GPI family.

The protein resides in the cytoplasm. It catalyses the reaction alpha-D-glucose 6-phosphate = beta-D-fructose 6-phosphate. It participates in carbohydrate biosynthesis; gluconeogenesis. The protein operates within carbohydrate degradation; glycolysis; D-glyceraldehyde 3-phosphate and glycerone phosphate from D-glucose: step 2/4. In terms of biological role, catalyzes the reversible isomerization of glucose-6-phosphate to fructose-6-phosphate. The polypeptide is Glucose-6-phosphate isomerase (Desulfitobacterium hafniense (strain Y51)).